An 83-amino-acid polypeptide reads, in one-letter code: Small ribosomal subunit protein uS17 (83 aa).

This sequence belongs to the universal ribosomal protein uS17 family. As to quaternary structure, part of the 30S ribosomal subunit.

One of the primary rRNA binding proteins, it binds specifically to the 5'-end of 16S ribosomal RNA. The chain is Small ribosomal subunit protein uS17 from Gloeobacter violaceus (strain ATCC 29082 / PCC 7421).